Here is a 476-residue protein sequence, read N- to C-terminus: Angiotensinogen (476 aa).

The first 24 residues, 1–24 (MAPAGVSLRATILCLVAWAGLAAG), serve as a signal peptide directing secretion. N-linked (GlcNAc...) asparagine glycosylation is found at Asn38, Asn161, Asn295, and Asn319. Cys42 and Cys162 form a disulfide bridge.

The protein belongs to the serpin family. In response to low blood pressure, the enzyme renin/REN cleaves angiotensinogen to produce angiotensin-1. Angiotensin-1 is a substrate of ACE (angiotensin converting enzyme) that removes a dipeptide to yield the physiologically active peptide angiotensin-2. Angiotensin-1 and angiotensin-2 can be further processed to generate angiotensin-3, angiotensin-4. Angiotensin 1-9 is cleaved from angiotensin-1 by ACE2 and can be further processed by ACE to produce angiotensin 1-7, angiotensin 1-5 and angiotensin 1-4. Angiotensin 1-7 has also been proposed to be cleaved from angiotensin-2 by ACE2 or from angiotensin-1 by MME (neprilysin). In terms of processing, the disulfide bond is labile. Angiotensinogen is present in the circulation in a near 40:60 ratio with the oxidized disulfide-bonded form, which preferentially interacts with receptor-bound renin.

Its subcellular location is the secreted. Essential component of the renin-angiotensin system (RAS), a potent regulator of blood pressure, body fluid and electrolyte homeostasis. Its function is as follows. Acts directly on vascular smooth muscle as a potent vasoconstrictor, affects cardiac contractility and heart rate through its action on the sympathetic nervous system, and alters renal sodium and water absorption through its ability to stimulate the zona glomerulosa cells of the adrenal cortex to synthesize and secrete aldosterone. Acts by binding to angiotensin receptors AGTR1 and AGTR2. Also binds the DEAR/FBXW7-AS1 receptor. Functionally, stimulates aldosterone release. In terms of biological role, is a ligand for the G-protein coupled receptor MAS1. Has vasodilator and antidiuretic effects. Has an antithrombotic effect that involves MAS1-mediated release of nitric oxide from platelets. The polypeptide is Angiotensinogen (AGT) (Pan troglodytes (Chimpanzee)).